The chain runs to 142 residues: Large ribosomal subunit protein uL13 (142 aa).

Belongs to the universal ribosomal protein uL13 family. As to quaternary structure, part of the 50S ribosomal subunit.

In terms of biological role, this protein is one of the early assembly proteins of the 50S ribosomal subunit, although it is not seen to bind rRNA by itself. It is important during the early stages of 50S assembly. The chain is Large ribosomal subunit protein uL13 from Klebsiella pneumoniae (strain 342).